The sequence spans 105 residues: Large ribosomal subunit protein bL21 (105 aa).

The protein belongs to the bacterial ribosomal protein bL21 family. In terms of assembly, part of the 50S ribosomal subunit. Contacts protein L20.

This protein binds to 23S rRNA in the presence of protein L20. This Natranaerobius thermophilus (strain ATCC BAA-1301 / DSM 18059 / JW/NM-WN-LF) protein is Large ribosomal subunit protein bL21.